We begin with the raw amino-acid sequence, 516 residues long: GMP synthase [glutamine-hydrolyzing] (516 aa).

Residues K6 to G199 form the Glutamine amidotransferase type-1 domain. The active-site Nucleophile is the C83. Catalysis depends on residues H173 and E175. In terms of domain architecture, GMPS ATP-PPase spans W200 to R391. ATP is bound at residue S227–T233.

In terms of assembly, homodimer.

The enzyme catalyses XMP + L-glutamine + ATP + H2O = GMP + L-glutamate + AMP + diphosphate + 2 H(+). It participates in purine metabolism; GMP biosynthesis; GMP from XMP (L-Gln route): step 1/1. Functionally, catalyzes the synthesis of GMP from XMP. In Solidesulfovibrio magneticus (strain ATCC 700980 / DSM 13731 / RS-1) (Desulfovibrio magneticus), this protein is GMP synthase [glutamine-hydrolyzing].